The chain runs to 534 residues: Protein tweety homolog 2 (534 aa).

At 1–44 (MQAARVDYIAPWWVVWLHSVPHVGLRLQPVNSTFSPGDESYQES) the chain is on the extracellular side. N31 carries N-linked (GlcNAc...) asparagine glycosylation. A helical transmembrane segment spans residues 45–65 (LLFLGLVAAVCLGLNLIFLVA). Topologically, residues 66–87 (YLVCACHCRRDDAVQTKQHHSC) are cytoplasmic. Residues 88–108 (CITWTAVVAGLICCAAVGVGF) traverse the membrane as a helical segment. Residues 109–213 (YGNSETNDGA…QTGYVEYYRW (105 aa)) are Extracellular-facing. Ca(2+)-binding residues include E113 and D116. N-linked (GlcNAc) asparagine glycosylation is present at N129. The short motif at 164 to 166 (RGD) is the RGD element. T199 carries the post-translational modification Phosphothreonine. A helical membrane pass occupies residues 214 to 234 (LSYLLLFILDLVICLIACLGL). The Cytoplasmic portion of the chain corresponds to 235–240 (AKRSKC). Residues 241–261 (LLASMLCCGALSLLLSWASLA) form a helical membrane-spanning segment. At 262 to 388 (ADGSAAVATS…AGICYDGLQG (127 aa)) the chain is on the extracellular side. Disulfide bonds link C274-C382 and C300-C367. A glycan (N-linked (GlcNAc...) asparagine) is linked at N283. A glycan (N-linked (GlcNAc) asparagine) is linked at N352. The helical transmembrane segment at 389 to 409 (LLYLGLFSFLAALAFSTMICA) threads the bilayer. The Cytoplasmic segment spans residues 410–534 (GPRAWKHFTT…LRHYGNQFPA (125 aa)). A Phosphoserine modification is found at S504. Residues 506–509 (PPTY) carry the PY-motif; mediates interaction with NEDD4L motif.

It belongs to the tweety family. Homodimer. Forms cis-homodimers in the presence of Ca(+2) and forms monomers and trans-dimers in the absence of Ca(2+). Interacts with NEDD4L. Post-translationally, N- Glycosylated. Contains high-mannose, hybrid and complex oligosaccharides. In terms of processing, ubiquitinated by NEDD4L, leading to its proteasomal degradation. In terms of tissue distribution, expressed at higher level in brain and testis and at lower levels in heart, ovary, spleen and peripheral blood leukocytes. Up-regulated in 13 of 16 renal cell carcinoma samples examined. Up-regulated in colon carcinoma.

Its subcellular location is the cell membrane. The enzyme catalyses chloride(in) = chloride(out). It catalyses the reaction L-glutamate(out) = L-glutamate(in). In terms of biological role, calcium-independent, swelling-dependent volume-regulated anion channel (VRAC-swell) which plays a pivotal role in the process of regulatory volume decrease (RVD) in the brain through the efflux of anions like chloride and organic osmolytes like glutamate. Probable large-conductance Ca(2+)-activated chloride channel. This chain is Protein tweety homolog 2 (TTYH2), found in Homo sapiens (Human).